The sequence spans 119 residues: Large ribosomal subunit protein bL20 (119 aa).

The protein belongs to the bacterial ribosomal protein bL20 family.

Functionally, binds directly to 23S ribosomal RNA and is necessary for the in vitro assembly process of the 50S ribosomal subunit. It is not involved in the protein synthesizing functions of that subunit. The protein is Large ribosomal subunit protein bL20 of Nitrosococcus oceani (strain ATCC 19707 / BCRC 17464 / JCM 30415 / NCIMB 11848 / C-107).